The following is a 1151-amino-acid chain: Elicitor of plant defense protein 1 (1151 aa).

Disordered stretches follow at residues 22–130 (YQDP…TLGE), 178–197 (ERIR…RSIK), and 236–255 (NYNS…DMHP). Residues 39–49 (IIEDGEPEDEW) show a composition bias toward acidic residues. Residues 64–99 (QNSASRLSKMSLTERFSIQTLDDTDGNTKSNRSSAT) show a composition bias toward polar residues. Over residues 104 to 122 (NPPDFSNGNDDSNGNSQNP) the composition is skewed to low complexity. Basic and acidic residues predominate over residues 178–187 (ERIRAEESDS). The region spanning 242–500 (PPPEPLNTDP…NLCTEAFNPL (259 aa)) is the uDENN domain. Residues 524–656 (EIPGSRTIDI…ARRKLMSLLQ (133 aa)) form the cDENN domain. Residues 658 to 1019 (AAPHKLRYGV…DREMQPANDA (362 aa)) form the dDENN domain. 2 stretches are compositionally biased toward polar residues: residues 695–711 (STPK…SSSG) and 744–760 (TSKS…SPVS). A disordered region spans residues 695 to 809 (STPKSTLGKW…SSSFGVDKHP (115 aa)). A compositionally biased stretch (basic and acidic residues) spans 784 to 798 (LREKRSGHFGEEKMR). A Phorbol-ester/DAG-type zinc finger spans residues 886 to 934 (GHCFNYMPKDNTSMCTICNDLAEGDGVYRCTGCKIVSHGRCLGYCSLIC).

It belongs to the EPD1 elicitor family.

The protein resides in the secreted. It localises to the host cell. Functionally, acts as an elicitor that triggers cell death and defense responses in the host plants. In Gibberella zeae (strain ATCC MYA-4620 / CBS 123657 / FGSC 9075 / NRRL 31084 / PH-1) (Wheat head blight fungus), this protein is Elicitor of plant defense protein 1.